Here is a 558-residue protein sequence, read N- to C-terminus: Ribonuclease J (558 aa).

The Zn(2+) site is built by H81, H83, D85, H86, H148, and D170. Residue H371–H375 participates in substrate binding. H397 contacts Zn(2+).

It belongs to the metallo-beta-lactamase superfamily. RNA-metabolizing metallo-beta-lactamase-like family. Bacterial RNase J subfamily. In terms of assembly, homodimer, may be a subunit of the RNA degradosome. It depends on Zn(2+) as a cofactor.

It is found in the cytoplasm. Its function is as follows. An RNase that has 5'-3' exonuclease and possibly endoonuclease activity. Involved in maturation of rRNA and in some organisms also mRNA maturation and/or decay. This chain is Ribonuclease J, found in Mycobacterium tuberculosis (strain CDC 1551 / Oshkosh).